The following is a 140-amino-acid chain: Nucleoside diphosphate kinase (140 aa).

ATP is bound by residues Lys11, Phe59, Arg87, Thr93, Arg104, and Asn114. The active-site Pros-phosphohistidine intermediate is His117.

This sequence belongs to the NDK family. Homotetramer. The cofactor is Mg(2+).

Its subcellular location is the cytoplasm. It carries out the reaction a 2'-deoxyribonucleoside 5'-diphosphate + ATP = a 2'-deoxyribonucleoside 5'-triphosphate + ADP. It catalyses the reaction a ribonucleoside 5'-diphosphate + ATP = a ribonucleoside 5'-triphosphate + ADP. Major role in the synthesis of nucleoside triphosphates other than ATP. The ATP gamma phosphate is transferred to the NDP beta phosphate via a ping-pong mechanism, using a phosphorylated active-site intermediate. This chain is Nucleoside diphosphate kinase, found in Sinorhizobium fredii (strain NBRC 101917 / NGR234).